A 499-amino-acid chain; its full sequence is Kynurenine 3-monooxygenase 3 (499 aa).

It belongs to the aromatic-ring hydroxylase family. KMO subfamily. Requires FAD as cofactor.

It is found in the mitochondrion outer membrane. It carries out the reaction L-kynurenine + NADPH + O2 + H(+) = 3-hydroxy-L-kynurenine + NADP(+) + H2O. It functions in the pathway cofactor biosynthesis; NAD(+) biosynthesis; quinolinate from L-kynurenine: step 1/3. Its function is as follows. Catalyzes the hydroxylation of L-kynurenine (L-Kyn) to form 3-hydroxy-L-kynurenine (L-3OHKyn). Required for synthesis of quinolinic acid. The protein is Kynurenine 3-monooxygenase 3 (bna4-3) of Aspergillus niger (strain ATCC MYA-4892 / CBS 513.88 / FGSC A1513).